A 755-amino-acid chain; its full sequence is uncharacterized protein (755 aa).

The next 9 helical transmembrane spans lie at 46 to 66, 70 to 90, 93 to 113, 118 to 138, 143 to 163, 411 to 431, 446 to 466, 482 to 502, and 514 to 534; these read LGLGVGLASQLILLADMGGLY, LKTIFGAWVGAAIAMAVGTIV, GWGLGLAITGFVLFASGYLAV, GAMVGIVTTFAFLLGAQNVST, FTSLAIGGMWSLILAIFIWPF, IAHLTQIPYGFWIVITLIFVL, LLGTFLGVLVMSIALKLIQDP, ALLRFHYSVAVFFITAFALIL, and ALLSRLVCTLIGSAIALGLAF.

Belongs to the YccS/YhfK family.

Its subcellular location is the cell membrane. This is an uncharacterized protein from Synechocystis sp. (strain ATCC 27184 / PCC 6803 / Kazusa).